An 879-amino-acid polypeptide reads, in one-letter code: Alanine--tRNA ligase (879 aa).

The Zn(2+) site is built by H566, H570, C668, and H672.

This sequence belongs to the class-II aminoacyl-tRNA synthetase family. The cofactor is Zn(2+).

Its subcellular location is the cytoplasm. It catalyses the reaction tRNA(Ala) + L-alanine + ATP = L-alanyl-tRNA(Ala) + AMP + diphosphate. Catalyzes the attachment of alanine to tRNA(Ala) in a two-step reaction: alanine is first activated by ATP to form Ala-AMP and then transferred to the acceptor end of tRNA(Ala). Also edits incorrectly charged Ser-tRNA(Ala) and Gly-tRNA(Ala) via its editing domain. This Listeria monocytogenes serovar 1/2a (strain ATCC BAA-679 / EGD-e) protein is Alanine--tRNA ligase.